The primary structure comprises 429 residues: Glucose-1-phosphate adenylyltransferase (429 aa).

Residues glycine 162, 177–178, and serine 209 each bind alpha-D-glucose 1-phosphate; that span reads EK.

The protein belongs to the bacterial/plant glucose-1-phosphate adenylyltransferase family. As to quaternary structure, homotetramer.

It catalyses the reaction alpha-D-glucose 1-phosphate + ATP + H(+) = ADP-alpha-D-glucose + diphosphate. Its pathway is glycan biosynthesis; glycogen biosynthesis. Functionally, involved in the biosynthesis of ADP-glucose, a building block required for the elongation reactions to produce glycogen. Catalyzes the reaction between ATP and alpha-D-glucose 1-phosphate (G1P) to produce pyrophosphate and ADP-Glc. The chain is Glucose-1-phosphate adenylyltransferase from Trichormus variabilis (strain ATCC 29413 / PCC 7937) (Anabaena variabilis).